A 516-amino-acid polypeptide reads, in one-letter code: L-amino-acid oxidase (516 aa).

A signal peptide spans 1–18 (MNVFFMFSLLFLAALGSC). Residues Cys28 and Cys191 are joined by a disulfide bond. Residues 61 to 62 (MS), 81 to 82 (EA), Arg89, and 105 to 108 (GPMR) each bind FAD. A substrate-binding site is contributed by Arg108. Asn190 carries an N-linked (GlcNAc...) asparagine glycan. His241 contributes to the substrate binding site. Val279 lines the FAD pocket. A disulfide bond links Cys349 and Cys430. Residue Asn379 is glycosylated (N-linked (GlcNAc...) asparagine). Residue Tyr390 coordinates substrate. Residues Glu475, 481–486 (HGWIDS), and 482–487 (GWIDSS) contribute to the FAD site. Residues 481–482 (HG) and 482–483 (GW) contribute to the substrate site.

It belongs to the flavin monoamine oxidase family. FIG1 subfamily. As to quaternary structure, homodimer; non-covalently linked. The cofactor is FAD. N-glycosylated. Expressed by the venom gland.

The protein resides in the secreted. The enzyme catalyses an L-alpha-amino acid + O2 + H2O = a 2-oxocarboxylate + H2O2 + NH4(+). In terms of biological role, catalyzes an oxidative deamination of predominantly hydrophobic and aromatic L-amino acids, thus producing hydrogen peroxide that may contribute to the diverse toxic effects of this enzyme. Exhibits diverse biological activities, such as hemorrhage, hemolysis, edema, apoptosis of vascular endothelial cells or tumor cell lines, antibacterial and antiparasitic activities, as well as regulation of platelet aggregation. Effects of snake L-amino oxidases on platelets are controversial, since they either induce aggregation or inhibit agonist-induced aggregation. These different effects are probably due to different experimental conditions. Displays dose-dependent inhibition on HIV-1 infection and replication. This is L-amino-acid oxidase from Trimeresurus stejnegeri (Chinese green tree viper).